Reading from the N-terminus, the 440-residue chain is Argininosuccinate lyase (440 aa).

Belongs to the lyase 1 family. Argininosuccinate lyase subfamily.

It localises to the cytoplasm. The catalysed reaction is 2-(N(omega)-L-arginino)succinate = fumarate + L-arginine. Its pathway is amino-acid biosynthesis; L-arginine biosynthesis; L-arginine from L-ornithine and carbamoyl phosphate: step 3/3. The chain is Argininosuccinate lyase from Clostridium botulinum (strain ATCC 19397 / Type A).